The following is a 368-amino-acid chain: 3-dehydroquinate synthase (368 aa).

NAD(+)-binding positions include 99–103 (GVVGD), 123–124 (TT), Lys136, and Lys145. Residues Glu178, His242, and His259 each contribute to the Zn(2+) site.

Belongs to the sugar phosphate cyclases superfamily. Dehydroquinate synthase family. NAD(+) is required as a cofactor. It depends on Co(2+) as a cofactor. The cofactor is Zn(2+).

It is found in the cytoplasm. The enzyme catalyses 7-phospho-2-dehydro-3-deoxy-D-arabino-heptonate = 3-dehydroquinate + phosphate. It participates in metabolic intermediate biosynthesis; chorismate biosynthesis; chorismate from D-erythrose 4-phosphate and phosphoenolpyruvate: step 2/7. Functionally, catalyzes the conversion of 3-deoxy-D-arabino-heptulosonate 7-phosphate (DAHP) to dehydroquinate (DHQ). This Chlorobaculum tepidum (strain ATCC 49652 / DSM 12025 / NBRC 103806 / TLS) (Chlorobium tepidum) protein is 3-dehydroquinate synthase.